Consider the following 657-residue polypeptide: tRNA 5-methylaminomethyl-2-thiouridine biosynthesis bifunctional protein MnmC (657 aa).

The segment at 1-238 is tRNA (mnm(5)s(2)U34)-methyltransferase; it reads MPASTLLQHA…KWEVMSGEYT (238 aa). The FAD-dependent cmnm(5)s(2)U34 oxidoreductase stretch occupies residues 265–657; the sequence is IGAGLAGSAS…FGLRRLIRGK (393 aa).

The protein in the N-terminal section; belongs to the methyltransferase superfamily. tRNA (mnm(5)s(2)U34)-methyltransferase family. This sequence in the C-terminal section; belongs to the DAO family. Requires FAD as cofactor.

It localises to the cytoplasm. It catalyses the reaction 5-aminomethyl-2-thiouridine(34) in tRNA + S-adenosyl-L-methionine = 5-methylaminomethyl-2-thiouridine(34) in tRNA + S-adenosyl-L-homocysteine + H(+). Functionally, catalyzes the last two steps in the biosynthesis of 5-methylaminomethyl-2-thiouridine (mnm(5)s(2)U) at the wobble position (U34) in tRNA. Catalyzes the FAD-dependent demodification of cmnm(5)s(2)U34 to nm(5)s(2)U34, followed by the transfer of a methyl group from S-adenosyl-L-methionine to nm(5)s(2)U34, to form mnm(5)s(2)U34. The protein is tRNA 5-methylaminomethyl-2-thiouridine biosynthesis bifunctional protein MnmC of Pseudomonas putida (strain W619).